The chain runs to 342 residues: MTIRIAINGFGRIGRNVVRALYESGRRAEITVVAINELADAAGIAHLLKYDTSHGRFAWDVRQEREQLFVGDDAIRLLHEPTIAALPWRELAVDVVLDCTGVYGSREHGEAHLQAGAKKVLFSHPGGNDLDATVVYGVNQDELRAEHRIVSNASCTTNCIIPIIKLLDDAYGIESGTVTTIHSAMHDQQVIDAYHPDLRRTRAASQSIIPVDTKLAAGITRIFPQFNDRFEAIAVRVPTINVTAIDLSVTVKKPVKACEVNQLLQKAAQGAFHGIVDYTELPLVSTDFNHDPHSAIVDGTQTRVSGAHLIKTLVWCDNEWGFANRMLDTTLAMAAIGFRFDA.

12–13 (RI) is a binding site for NAD(+). Substrate contacts are provided by residues 154–156 (SCT), R200, 213–214 (TK), and R236. The active-site Nucleophile is the C155. N318 lines the NAD(+) pocket.

The protein belongs to the glyceraldehyde-3-phosphate dehydrogenase family. Epd subfamily. Homotetramer.

It is found in the cytoplasm. It carries out the reaction D-erythrose 4-phosphate + NAD(+) + H2O = 4-phospho-D-erythronate + NADH + 2 H(+). Its pathway is cofactor biosynthesis; pyridoxine 5'-phosphate biosynthesis; pyridoxine 5'-phosphate from D-erythrose 4-phosphate: step 1/5. Its function is as follows. Catalyzes the NAD-dependent conversion of D-erythrose 4-phosphate to 4-phosphoerythronate. The polypeptide is D-erythrose-4-phosphate dehydrogenase (Klebsiella pneumoniae (strain 342)).